Consider the following 151-residue polypeptide: Transcriptional regulator MraZ (151 aa).

SpoVT-AbrB domains follow at residues 5–52 (ATAV…PLDE) and 81–124 (ATEC…SDVE).

This sequence belongs to the MraZ family. Forms oligomers.

It is found in the cytoplasm. The protein localises to the nucleoid. The sequence is that of Transcriptional regulator MraZ from Haemophilus influenzae (strain 86-028NP).